Here is a 315-residue protein sequence, read N- to C-terminus: Zinc transport protein ZntB (315 aa).

The Cytoplasmic segment spans residues 1–250; sequence MGFMIEHWDF…RDEKTNKNSY (250 aa). A helical transmembrane segment spans residues 251–271; it reads LFTLVATIFLPTSFLTGLLGI. Residues 272–282 lie on the Periplasmic side of the membrane; sequence NIGGMPGVESS. A helical transmembrane segment spans residues 283–303; it reads MAFTWFCIALIVIFGLEWLLF. Residues 304–315 are Cytoplasmic-facing; that stretch reads KRLGFTNKTDDE.

The protein belongs to the CorA metal ion transporter (MIT) (TC 1.A.35) family. In terms of assembly, homopentamer. Can assemble pentamers in the absence of the transmembrane regions.

The protein localises to the cell inner membrane. It catalyses the reaction Zn(2+)(out) + H(+)(out) = Zn(2+)(in) + H(+)(in). In terms of biological role, zinc transporter. Acts as a Zn(2+):proton symporter, which likely mediates zinc ion uptake. The protein is Zinc transport protein ZntB of Vibrio parahaemolyticus serotype O3:K6 (strain RIMD 2210633).